Here is a 734-residue protein sequence, read N- to C-terminus: Predicted GPI-anchored protein 49 (734 aa).

The N-terminal stretch at 1-16 (MNYITSLLLLSSNTFL) is a signal peptide. 4 N-linked (GlcNAc...) asparagine glycosylation sites follow: Asn-27, Asn-56, Asn-68, and Asn-71. Residues 78 to 145 (DNSDTDIDDS…NESDTQNEND (68 aa)) form a disordered region. A compositionally biased stretch (low complexity) spans 87–98 (SSSNSEDVSSND). N-linked (GlcNAc...) asparagine glycans are attached at residues Asn-105, Asn-118, Asn-136, and Asn-180. Residues 110–129 (FSDESDEGNDSDDNGDEVEN) are compositionally biased toward acidic residues. The segment covering 130–141 (MENNQANESDTQ) has biased composition (polar residues). Disordered stretches follow at residues 216 to 262 (SPKS…LKSK) and 331 to 360 (DANP…RLPT). Residues 228–259 (SRKKTLKSKSKSKSSKLKHKSRKSHKRRPKLL) are compositionally biased toward basic residues. N-linked (GlcNAc...) asparagine glycans are attached at residues Asn-388 and Asn-427. The segment at 447–479 (PPRYSNHHSEFTVERPPRPSRTKKRPRIKAKKT) is disordered. Positions 453–463 (HHSEFTVERPP) are enriched in basic and acidic residues. Residues 464–479 (RPSRTKKRPRIKAKKT) show a composition bias toward basic residues. N-linked (GlcNAc...) asparagine glycosylation is present at Asn-517. The interval 582–653 (KPQETKLHSP…STTSTKPNDQ (72 aa)) is disordered. Positions 592–611 (TSTDTKSSKLMSSSSSNNNK) are enriched in low complexity. Polar residues predominate over residues 620–631 (EYNQTQESTSYN). Residues Asn-622 and Asn-631 are each glycosylated (N-linked (GlcNAc...) asparagine). Residues 632–650 (TTKAVPKTSVVSSTTSTKP) are compositionally biased toward low complexity. Ser-707 carries GPI-anchor amidated serine lipidation. Residues 708-734 (ASQNLSFSVLGLIILLLLLPGLLIIIM) constitute a propeptide, removed in mature form. Asn-711 is a glycosylation site (N-linked (GlcNAc...) asparagine).

Its subcellular location is the cell membrane. The chain is Predicted GPI-anchored protein 49 (PGA49) from Candida albicans (strain SC5314 / ATCC MYA-2876) (Yeast).